The sequence spans 82 residues: Cytochrome b559 subunit alpha (82 aa).

A helical membrane pass occupies residues 22–36; the sequence is VIHAVTLPSIFLAGF. H24 is a heme binding site.

It belongs to the PsbE/PsbF family. In terms of assembly, heterodimer of an alpha subunit and a beta subunit. PSII is composed of 1 copy each of membrane proteins PsbA, PsbB, PsbC, PsbD, PsbE, PsbF, PsbH, PsbI, PsbJ, PsbK, PsbL, PsbM, PsbT, PsbX, PsbY, PsbZ, Psb30/Ycf12, peripheral proteins PsbO, CyanoQ (PsbQ), PsbU, PsbV and a large number of cofactors. It forms dimeric complexes. Heme b is required as a cofactor.

It is found in the cellular thylakoid membrane. In terms of biological role, this b-type cytochrome is tightly associated with the reaction center of photosystem II (PSII). PSII is a light-driven water:plastoquinone oxidoreductase that uses light energy to abstract electrons from H(2)O, generating O(2) and a proton gradient subsequently used for ATP formation. It consists of a core antenna complex that captures photons, and an electron transfer chain that converts photonic excitation into a charge separation. This chain is Cytochrome b559 subunit alpha, found in Synechococcus sp. (strain CC9605).